The following is a 135-amino-acid chain: Histone H3 (135 aa).

Residues 1-40 (MARTKQTARKSTGGKAPRKAVATKARKTAPPVGGVKKPHR) are disordered. Residues 19–31 (KAVATKARKTAPP) show a composition bias toward low complexity.

This sequence belongs to the histone H3 family. In terms of assembly, the nucleosome is a histone octamer containing two molecules each of H2A, H2B, H3 and H4 assembled in one H3-H4 heterotetramer and two H2A-H2B heterodimers. The octamer wraps approximately 147 bp of DNA.

The protein localises to the nucleus. It localises to the chromosome. In terms of biological role, core component of nucleosome. Nucleosomes wrap and compact DNA into chromatin, limiting DNA accessibility to the cellular machineries which require DNA as a template. Histones thereby play a central role in transcription regulation, DNA repair, DNA replication and chromosomal stability. DNA accessibility is regulated via a complex set of post-translational modifications of histones, also called histone code, and nucleosome remodeling. The sequence is that of Histone H3 from Mastigamoeba balamuthi (Phreatamoeba balamuthi).